Here is a 195-residue protein sequence, read N- to C-terminus: MIVGISGSPRRKATEFVLGEALKMLEERGFETKFFTVRGKKISPCQHCDYCLKHKECRIKDDMFELYEMLKDAKGIVMATPVYNGGVSAQIKAVMDRCRALVAADYDFFRGKVGMAIAVGGDRIGGQELAIQQILTFYILNGVIPVSGGSFGANIGATFWSRDTLEGVKEDEEGFRSLRKTVKRFAEMLEKMEGV.

4 residues coordinate [4Fe-4S] cluster: Cys-45, Cys-48, Cys-51, and Cys-57.

This sequence belongs to the SsuE family. Isf subfamily. Homodimer. It depends on FMN as a cofactor. Requires [4Fe-4S] cluster as cofactor.

Its function is as follows. Redox-active protein probably involved in electron transport. The chain is Iron-sulfur flavoprotein AF_1519 from Archaeoglobus fulgidus (strain ATCC 49558 / DSM 4304 / JCM 9628 / NBRC 100126 / VC-16).